A 491-amino-acid chain; its full sequence is DEAD-box ATP-dependent RNA helicase 36 (491 aa).

The segment covering 1–10 has biased composition (acidic residues); it reads MEEPTPEEEG. The tract at residues 1 to 56 is disordered; sequence MEEPTPEEEGGITIMSKSRKNPKTVVNIQSQKLDSDQNTPQFEKFTNPNPSSDTTS. A compositionally biased stretch (polar residues) spans 24–56; sequence TVVNIQSQKLDSDQNTPQFEKFTNPNPSSDTTS. The Q motif motif lies at 58–86; that stretch reads TNFEGLGLAEWAVETCKELGMRKPTPVQT. The Helicase ATP-binding domain occupies 89–262; sequence VPKILAGRDV…EHSSNKAYFY (174 aa). 102–109 is an ATP binding site; the sequence is AQTGSGKT. The short motif at 210–213 is the DEAD box element; it reads DEAD. Residues 289–438 enclose the Helicase C-terminal domain; it reads YLVHILSQME…NKKVITDSLE (150 aa). A disordered region spans residues 471–491; it reads KTLADKGLLKKRGKRQKSTEN. Positions 479–491 are enriched in basic residues; sequence LKKRGKRQKSTEN.

The protein belongs to the DEAD box helicase family. DDX49/DBP8 subfamily.

It catalyses the reaction ATP + H2O = ADP + phosphate + H(+). The sequence is that of DEAD-box ATP-dependent RNA helicase 36 (RH36) from Arabidopsis thaliana (Mouse-ear cress).